Reading from the N-terminus, the 218-residue chain is Adenylate kinase (218 aa).

Residue 10 to 15 (GAGKGT) participates in ATP binding. The segment at 30 to 59 (STGDMLRAAVKAGTPLGIAAKKIMDEGGLV) is NMP. Residues Thr31, Arg36, 57–59 (GLV), 85–88 (GFPR), and Gln92 each bind AMP. Residues 122–159 (GRRVHPASGRTYHVKFNPPKVAGRDDVTGEELIQRDDD) are LID. ATP contacts are provided by residues Arg123 and 132-133 (TY). The AMP site is built by Arg156 and Arg167. Gly203 is a binding site for ATP.

This sequence belongs to the adenylate kinase family. As to quaternary structure, monomer.

The protein resides in the cytoplasm. The enzyme catalyses AMP + ATP = 2 ADP. It functions in the pathway purine metabolism; AMP biosynthesis via salvage pathway; AMP from ADP: step 1/1. In terms of biological role, catalyzes the reversible transfer of the terminal phosphate group between ATP and AMP. Plays an important role in cellular energy homeostasis and in adenine nucleotide metabolism. The protein is Adenylate kinase of Herminiimonas arsenicoxydans.